The primary structure comprises 678 residues: MKCLKDGFLHHIRSIKSGSTLTAVSSNQLVNLYSKSGLLREARNVFDEMLERNVYSWNAVIAAYVKFNNVKEARELFESDNCERDLITYNTLLSGFAKTDGCESEAIEMFGEMHRKEKDDIWIDDFTVTTMVKLSAKLTNVFYGEQLHGVLVKTGNDGTKFAVSSLIHMYSKCGKFKEVCNIFNGSCVEFVDSVARNAMIAAYCREGDIDKALSVFWRNPELNDTISWNTLIAGYAQNGYEEEALKMAVSMEENGLKWDEHSFGAVLNVLSSLKSLKIGKEVHARVLKNGSYSNKFVSSGIVDVYCKCGNMKYAESAHLLYGFGNLYSASSMIVGYSSQGKMVEAKRLFDSLSEKNLVVWTAMFLGYLNLRQPDSVLELARAFIANETNTPDSLVMVSVLGACSLQAYMEPGKEIHGHSLRTGILMDKKLVTAFVDMYSKCGNVEYAERIFDSSFERDTVMYNAMIAGCAHHGHEAKSFQHFEDMTEGGFKPDEITFMALLSACRHRGLVLEGEKYFKSMIEAYNISPETGHYTCMIDLYGKAYRLDKAIELMEGIDQVEKDAVILGAFLNACSWNKNTELVKEVEEKLLVIEGSNGSRYIQIANAYASSGRWDEMQRIRHQMRGKELEIFSGCSWANIDKQFHMFTSSDISHYETEAIYAMLHFVTKDLSEIDEIMI.

PPR repeat units follow at residues 22-56, 57-84, 85-116, 124-158, 159-190, 192-222, 224-258, 259-293, 294-324, 325-359, 360-390, 392-426, 427-457, 458-492, 493-528, and 529-563; these read TAVSSNQLVNLYSKSGLLREARNVFDEMLERNVYS, WNAVIAAYVKFNNVKEARELFESDNCER, DLITYNTLLSGFAKTDGCESEAIEMFGEMHRK, DDFTVTTMVKLSAKLTNVFYGEQLHGVLVKTGNDG, TKFAVSSLIHMYSKCGKFKEVCNIFNGSCVEF, DSVARNAMIAAYCREGDIDKALSVFWRNPEL, DTISWNTLIAGYAQNGYEEEALKMAVSMEENGLKW, DEHSFGAVLNVLSSLKSLKIGKEVHARVLKNGSYS, NKFVSSGIVDVYCKCGNMKYAESAHLLYGFG, NLYSASSMIVGYSSQGKMVEAKRLFDSLSEKNLVV, WTAMFLGYLNLRQPDSVLELARAFIANETNT, DSLVMVSVLGACSLQAYMEPGKEIHGHSLRTGILM, DKKLVTAFVDMYSKCGNVEYAERIFDSSFER, DTVMYNAMIAGCAHHGHEAKSFQHFEDMTEGGFKP, DEITFMALLSACRHRGLVLEGEKYFKSMIEAYNISP, and ETGHYTCMIDLYGKAYRLDKAIELMEGIDQVEKDA. Positions 565 to 640 are type E motif; sequence ILGAFLNACS…FSGCSWANID (76 aa). The segment at 641-671 is type E(+) motif; sequence KQFHMFTSSDISHYETEAIYAMLHFVTKDLS.

Belongs to the PPR family. PCMP-E subfamily.

The protein is Putative pentatricopeptide repeat-containing protein At3g18840 (PCMP-E92) of Arabidopsis thaliana (Mouse-ear cress).